Consider the following 362-residue polypeptide: Chorismate synthase (362 aa).

Arg46 contributes to the NADP(+) binding site. FMN-binding positions include 122–124 (RSS), 238–239 (NA), Gly278, 293–297 (KPTPS), and Arg319.

It belongs to the chorismate synthase family. Homotetramer. It depends on FMNH2 as a cofactor.

The catalysed reaction is 5-O-(1-carboxyvinyl)-3-phosphoshikimate = chorismate + phosphate. Its pathway is metabolic intermediate biosynthesis; chorismate biosynthesis; chorismate from D-erythrose 4-phosphate and phosphoenolpyruvate: step 7/7. Catalyzes the anti-1,4-elimination of the C-3 phosphate and the C-6 proR hydrogen from 5-enolpyruvylshikimate-3-phosphate (EPSP) to yield chorismate, which is the branch point compound that serves as the starting substrate for the three terminal pathways of aromatic amino acid biosynthesis. This reaction introduces a second double bond into the aromatic ring system. This Campylobacter jejuni subsp. doylei (strain ATCC BAA-1458 / RM4099 / 269.97) protein is Chorismate synthase.